Here is a 412-residue protein sequence, read N- to C-terminus: AA9 family lytic polysaccharide monooxygenase A (412 aa).

An N-terminal signal peptide occupies residues 1–20 (MKTTTYSLLALAAASKLASA). Residues His21 and His103 each coordinate Cu(2+). The cysteines at positions 63 and 186 are disulfide-linked. Asn151 is a glycosylation site (N-linked (GlcNAc...) asparagine). His172 serves as a coordination point for O2. A Cu(2+)-binding site is contributed by Tyr183. Residues Asn334 and Asn385 are each glycosylated (N-linked (GlcNAc...) asparagine). The CBM1 domain maps to 373–409 (GVAKMYERCGGINHTGPTTCESGSVCKKWNPYYYQCV).

The protein belongs to the polysaccharide monooxygenase AA9 family. Cu(2+) is required as a cofactor.

It is found in the secreted. The enzyme catalyses [(1-&gt;4)-beta-D-glucosyl]n+m + reduced acceptor + O2 = 4-dehydro-beta-D-glucosyl-[(1-&gt;4)-beta-D-glucosyl]n-1 + [(1-&gt;4)-beta-D-glucosyl]m + acceptor + H2O.. In terms of biological role, lytic polysaccharide monooxygenase (LPMO) that depolymerizes crystalline and amorphous polysaccharides via the oxidation of scissile alpha- or beta-(1-4)-glycosidic bonds, yielding C4 oxidation products. Catalysis by LPMOs requires the reduction of the active-site copper from Cu(II) to Cu(I) by a reducing agent and H(2)O(2) or O(2) as a cosubstrate. The polypeptide is AA9 family lytic polysaccharide monooxygenase A (eglD) (Aspergillus niger (strain ATCC MYA-4892 / CBS 513.88 / FGSC A1513)).